The following is a 235-amino-acid chain: Ribosomal RNA small subunit methyltransferase G (235 aa).

Residues glycine 98, methionine 103, 149 to 150 (VE), and arginine 164 contribute to the S-adenosyl-L-methionine site.

This sequence belongs to the methyltransferase superfamily. RNA methyltransferase RsmG family.

The protein localises to the cytoplasm. It catalyses the reaction guanosine(527) in 16S rRNA + S-adenosyl-L-methionine = N(7)-methylguanosine(527) in 16S rRNA + S-adenosyl-L-homocysteine. Functionally, specifically methylates the N7 position of guanine in position 527 of 16S rRNA. In Cupriavidus pinatubonensis (strain JMP 134 / LMG 1197) (Cupriavidus necator (strain JMP 134)), this protein is Ribosomal RNA small subunit methyltransferase G.